A 744-amino-acid polypeptide reads, in one-letter code: Receptor-like serine/threonine-protein kinase ALE2 (744 aa).

Residues 1 to 19 (MRNFAMLLLLILLLHSLAS) form the signal peptide. At 20-260 (FPICFARLFP…SQGIGFRTIA (241 aa)) the chain is on the extracellular side. Residues 59–68 (PAFSPNPSRI) show a composition bias toward pro residues. Residues 59 to 79 (PAFSPNPSRIPPLRHKGHHRH) form a disordered region. Basic residues predominate over residues 70–79 (PLRHKGHHRH). N-linked (GlcNAc...) asparagine glycosylation is found at N87, N186, N204, N243, and N249. The helical transmembrane segment at 261–281 (IIALSGFVLILVLVGAISIIV) threads the bilayer. At 282–744 (KWKKIGKSSN…HLWSGNGDWL (463 aa)) the chain is on the cytoplasmic side. The region spanning 349-619 (FSAKRVLGEG…GEVVQALKLI (271 aa)) is the Protein kinase domain. Residues 355–363 (LGEGGFGRV) and K377 each bind ATP. D470 serves as the catalytic Proton acceptor. 2 disordered regions span residues 681–705 (EDME…PNRS) and 722–744 (GSMS…GDWL).

Belongs to the protein kinase superfamily. Ser/Thr protein kinase family. Post-translationally, autophosphorylated and phosphorylated by ACR4.

The protein resides in the cell membrane. It carries out the reaction L-seryl-[protein] + ATP = O-phospho-L-seryl-[protein] + ADP + H(+). It catalyses the reaction L-threonyl-[protein] + ATP = O-phospho-L-threonyl-[protein] + ADP + H(+). In terms of biological role, required during the differentiation of the protoderm into shoots epidermis and cuticle. The polypeptide is Receptor-like serine/threonine-protein kinase ALE2 (ALE2) (Arabidopsis thaliana (Mouse-ear cress)).